The following is a 221-amino-acid chain: MGQKVNPHGLRVGVIKGWDAKWYANKKNFADNLIEDNKIRKFVKKELFSAGISKIEIERAAKRVKLNIYTAKPGVIIGKGGSGIEALKNKLTQFVENKNVLINIVEVKSAEADAQLMAENIAAQLEKRISFRRAMKQTMQRAMKHGIKGVKTACSGRLGGAEIARTEHYHEGTIPLQTLRADIDYGFAEADTTYGKIGVKVWVYNGEVLPTKKVEKEEANA.

Residues 39-108 form the KH type-2 domain; it reads IRKFVKKELF…NVLINIVEVK (70 aa).

It belongs to the universal ribosomal protein uS3 family. In terms of assembly, part of the 30S ribosomal subunit. Forms a tight complex with proteins S10 and S14.

In terms of biological role, binds the lower part of the 30S subunit head. Binds mRNA in the 70S ribosome, positioning it for translation. In Clostridium beijerinckii (strain ATCC 51743 / NCIMB 8052) (Clostridium acetobutylicum), this protein is Small ribosomal subunit protein uS3.